Here is a 230-residue protein sequence, read N- to C-terminus: MAQAVTSMAGLRGASQAVLEGSLQINGSNRLNISRVSVGSQRTGLVIRAQQNVSVPESSRRSVIGLVAAGLAGGSFVKAVFAEAIPIKVGGPPLPSGGLPGTDNSDQARDFSLALKDRFYIQPLSPTEAAARAKDSAKEIINVKSFIDKKAWPYVQNDLRLRASYLRYDLNTVISAKPKEEKQSLKDLTAKLFQTIDNLDYAARSKSSPDAEKYYSETVSSLNNVLAKLG.

A chloroplast-targeting transit peptide spans M1–A49. Residues Q50–A82 constitute a thylakoid transit peptide. S125 is subject to Phosphoserine. Residue T195 is modified to Phosphothreonine. Y215 carries the post-translational modification Phosphotyrosine. Position 216 is a phosphoserine (S216). T218 bears the Phosphothreonine mark.

Belongs to the PsbQ family.

It localises to the plastid. Its subcellular location is the chloroplast thylakoid membrane. Required for photosystem II assembly/stability and photoautotrophic growth under low light conditions. This chain is Oxygen-evolving enhancer protein 3-2, chloroplastic (PSBQ2), found in Arabidopsis thaliana (Mouse-ear cress).